A 162-amino-acid polypeptide reads, in one-letter code: Endoribonuclease YbeY (162 aa).

Zn(2+) is bound by residues His118, His122, and His128.

Belongs to the endoribonuclease YbeY family. Requires Zn(2+) as cofactor.

It localises to the cytoplasm. Single strand-specific metallo-endoribonuclease involved in late-stage 70S ribosome quality control and in maturation of the 3' terminus of the 16S rRNA. In Glaesserella parasuis serovar 5 (strain SH0165) (Haemophilus parasuis), this protein is Endoribonuclease YbeY.